An 84-amino-acid polypeptide reads, in one-letter code: Cell division topological specificity factor (84 aa).

The protein belongs to the MinE family.

Prevents the cell division inhibition by proteins MinC and MinD at internal division sites while permitting inhibition at polar sites. This ensures cell division at the proper site by restricting the formation of a division septum at the midpoint of the long axis of the cell. This is Cell division topological specificity factor from Chromohalobacter salexigens (strain ATCC BAA-138 / DSM 3043 / CIP 106854 / NCIMB 13768 / 1H11).